The sequence spans 619 residues: 4-hydroxyphenylalkanoate adenylyltransferase (619 aa).

The protein belongs to the ATP-dependent AMP-binding enzyme family.

The enzyme catalyses 17-(4-hydroxyphenyl)heptadecanoate + holo-[(phenol)carboxyphthiodiolenone synthase] + ATP = 17-(4-hydroxyphenyl)heptadecanoyl-[(phenol)carboxyphthiodiolenone synthase] + AMP + diphosphate. It catalyses the reaction 19-(4-hydroxyphenyl)nonadecanoate + holo-[(phenol)carboxyphthiodiolenone synthase] + ATP = 19-(4-hydroxyphenyl)nonadecanoyl-[(phenol)carboxyphthiodiolenone synthase] + AMP + diphosphate. Its pathway is lipid metabolism; fatty acid biosynthesis. Catalyzes the activation of long-chain fatty acids as acyl-adenylates (acyl-AMP), which are then transferred to the multifunctional polyketide synthase PpsA for further chain extension. Involved in the biosynthesis of phenolphthiocerol, which is an important intermediate in the biosynthesis of phenolic glycolipid (PGL), also called mycosid B. The polypeptide is 4-hydroxyphenylalkanoate adenylyltransferase (fadD29) (Mycobacterium bovis (strain ATCC BAA-935 / AF2122/97)).